Consider the following 379-residue polypeptide: ATPase ASNA1 homolog (379 aa).

Positions 1-20 (MSEDESNSVSCSLSLESDGY) are disordered. Low complexity predominate over residues 7–18 (NSVSCSLSLESD). 46-53 (KGGVGKTT) serves as a coordination point for ATP. The active site involves aspartate 75. Residues glutamate 246 and asparagine 273 each coordinate ATP.

It belongs to the arsA ATPase family. As to quaternary structure, homodimer.

Its subcellular location is the cytoplasm. It is found in the endoplasmic reticulum. ATPase required for the post-translational delivery of tail-anchored (TA) proteins to the endoplasmic reticulum. Recognizes and selectively binds the transmembrane domain of TA proteins in the cytosol. This complex then targets to the endoplasmic reticulum by membrane-bound receptors, where the tail-anchored protein is released for insertion. This process is regulated by ATP binding and hydrolysis. ATP binding drives the homodimer towards the closed dimer state, facilitating recognition of newly synthesized TA membrane proteins. ATP hydrolysis is required for insertion. Subsequently, the homodimer reverts towards the open dimer state, lowering its affinity for the membrane-bound receptor, and returning it to the cytosol to initiate a new round of targeting. This Plasmodium falciparum (isolate 3D7) protein is ATPase ASNA1 homolog.